The chain runs to 1405 residues: DNA-directed RNA polymerase subunit beta' (1405 aa).

Zn(2+)-binding residues include cysteine 70, cysteine 72, cysteine 85, and cysteine 88. Aspartate 460, aspartate 462, and aspartate 464 together coordinate Mg(2+). 4 residues coordinate Zn(2+): cysteine 814, cysteine 888, cysteine 895, and cysteine 898.

This sequence belongs to the RNA polymerase beta' chain family. The RNAP catalytic core consists of 2 alpha, 1 beta, 1 beta' and 1 omega subunit. When a sigma factor is associated with the core the holoenzyme is formed, which can initiate transcription. It depends on Mg(2+) as a cofactor. Zn(2+) serves as cofactor.

It catalyses the reaction RNA(n) + a ribonucleoside 5'-triphosphate = RNA(n+1) + diphosphate. Its function is as follows. DNA-dependent RNA polymerase catalyzes the transcription of DNA into RNA using the four ribonucleoside triphosphates as substrates. The sequence is that of DNA-directed RNA polymerase subunit beta' from Shewanella sp. (strain ANA-3).